Reading from the N-terminus, the 806-residue chain is Transitional endoplasmic reticulum ATPase (806 aa).

Ser-3 is subject to Phosphoserine. ATP-binding positions include 247–253 (PGTGKTL), Asn-348, His-384, and 521–526 (GCGKTL). Disordered stretches follow at residues 708-727 (RRERERQTNPSAMEVEEDDP) and 768-806 (FGSFRFPSSNQGGSGPSQGSSGGGGGNVFNEDNDDDLYG). Positions 768–778 (FGSFRFPSSNQ) are enriched in low complexity. Gly residues predominate over residues 779 to 794 (GGSGPSQGSSGGGGGN).

This sequence belongs to the AAA ATPase family. Homohexamer.

It is found in the cytoplasm. It localises to the cytosol. Its subcellular location is the endoplasmic reticulum. The protein localises to the nucleus. The catalysed reaction is ATP + H2O = ADP + phosphate + H(+). In terms of biological role, necessary for the fragmentation of Golgi stacks during mitosis and for their reassembly after mitosis. Involved in the formation of the nuclear envelope, and of the transitional endoplasmic reticulum (tER). The transfer of membranes from the endoplasmic reticulum to the Golgi apparatus occurs via 50-70 nm transition vesicles which derive from part-rough, part-smooth transitional elements of the endoplasmic reticulum (tER). Vesicle budding from the tER is an ATP-dependent process. Also involved in DNA damage response: recruited to double-strand breaks (DSBs) sites and promotes the recruitment of tp53bp1 at DNA damage sites. Together with sprtn metalloprotease, involved in the repair of covalent DNA-protein cross-links (DPCs) during DNA synthesis. Involved in interstrand cross-link repair in response to replication stress by mediating unloading of the ubiquitinated CMG helicase complex. Enhances cell cycle progression and inhibits apoptosis at low temperatures. Essential for the maturation of ubiquitin-containing autophagosomes and the clearance of ubiquitinated protein by autophagy. Acts as a negative regulator of type I interferon production by promoting ubiquitination of RIGI. May play a role in the ubiquitin-dependent sorting of membrane proteins to lysosomes where they undergo degradation. May more particularly play a role in caveolins sorting in cells. By controlling the steady-state expression of the IGF1R receptor, indirectly regulates the insulin-like growth factor receptor signaling pathway. In Danio rerio (Zebrafish), this protein is Transitional endoplasmic reticulum ATPase.